Consider the following 620-residue polypeptide: Chaperone protein HtpG (620 aa).

Residues 1-339 (MAKHQFQTEI…SEDLPLNVSR (339 aa)) are a; substrate-binding. The b stretch occupies residues 340 to 546 (ELLQENRILA…ASDPMAGMAA (207 aa)). Positions 547 to 620 (MFAQMGQEMP…RVASLATKAL (74 aa)) are c.

This sequence belongs to the heat shock protein 90 family. Homodimer.

The protein resides in the cytoplasm. In terms of biological role, molecular chaperone. Has ATPase activity. The sequence is that of Chaperone protein HtpG from Sulfurovum sp. (strain NBC37-1).